Here is a 168-residue protein sequence, read N- to C-terminus: Protein-export protein SecB (168 aa).

Polar residues predominate over residues 1 to 10 (MSDQGTNNGE). A disordered region spans residues 1 to 22 (MSDQGTNNGESGNGGAQNGEAP).

Belongs to the SecB family. As to quaternary structure, homotetramer, a dimer of dimers. One homotetramer interacts with 1 SecA dimer.

It localises to the cytoplasm. In terms of biological role, one of the proteins required for the normal export of preproteins out of the cell cytoplasm. It is a molecular chaperone that binds to a subset of precursor proteins, maintaining them in a translocation-competent state. It also specifically binds to its receptor SecA. The protein is Protein-export protein SecB of Parvibaculum lavamentivorans (strain DS-1 / DSM 13023 / NCIMB 13966).